The following is a 298-amino-acid chain: uncharacterized protein (298 aa).

The first 19 residues, 1 to 19, serve as a signal peptide directing secretion; that stretch reads MFRKFLFIQLLIVTSLVKA. Residues 278-298 form a disordered region; it reads RNNPPLKNNNAKSKNSYETYK. Over residues 279–298 the composition is skewed to low complexity; the sequence is NNPPLKNNNAKSKNSYETYK.

This sequence to R.prowazekii RP296.

This is an uncharacterized protein from Rickettsia prowazekii (strain Madrid E).